A 180-amino-acid polypeptide reads, in one-letter code: Cytokinin-beta-glucosidase 1 (180 aa).

Its function is as follows. Hydrolyzes cytokinin glucosides thus liberating free cytokinins. The polypeptide is Cytokinin-beta-glucosidase 1 (ROLC1) (Panax ginseng (Korean ginseng)).